The chain runs to 513 residues: MKFKLKGIIKLSKEVPGIEDDLEKFFTEAESDILRRGVPEGQEHEAAHIKSWRLEGDTLHIEMESGRRVRAHDGLLRLKKPLGQLLGPKYRVGVRGISVTDYTMEMKAPGVSGIPSLAELPFVEDAAITDGTIMVRFQPLEESDLRKHVFDRVVKHARTLVESSDDLTVQVTRATPGEIIARSRSRDFFFEGDPTEEAMRLGWVKKFPGRGQWFYGPKITALHRALEEFFIERIVKPLGFVECLFPKLIPLDIMNKMRYLEGLPEGMYYCSAPSRDPETFEEFKNELIINREVPMDLLKRGIKDPGYVIAPAQCEPFYQFLSHEVVSAEDLPVKFFDRSGWTYRWEAGGSKGLDRVHEFQRVELVWLAEPGETEEIRDRTVELSHDAADELELEWYTEVGDDPFYLEGRKVEERGIEFPDVPKYEMRLSLPGREKGVAVVSANVHGTHFIEGFSIREARNLNIWTGCTGIGLSRWIYGFLAQKGFETGNWPDFIGERVEGVENPRIITWPRQD.

Ala312 lines the L-serine pocket. A Zn(2+)-binding site is contributed by Cys314. Arg344 is an L-serine binding site. ATP-binding positions include 344–346 and 355–356; these read RWE and RV. L-serine is bound at residue 361–363; sequence RVE. 2 residues coordinate Zn(2+): Glu363 and Cys467. ATP is bound at residue Arg474.

It belongs to the class-II aminoacyl-tRNA synthetase family. Type-2 seryl-tRNA synthetase subfamily. Homodimer. Requires Zn(2+) as cofactor.

It localises to the cytoplasm. It catalyses the reaction tRNA(Ser) + L-serine + ATP = L-seryl-tRNA(Ser) + AMP + diphosphate + H(+). It carries out the reaction tRNA(Sec) + L-serine + ATP = L-seryl-tRNA(Sec) + AMP + diphosphate + H(+). It participates in aminoacyl-tRNA biosynthesis; selenocysteinyl-tRNA(Sec) biosynthesis; L-seryl-tRNA(Sec) from L-serine and tRNA(Sec): step 1/1. Its function is as follows. Catalyzes the attachment of serine to tRNA(Ser). Is also able to aminoacylate tRNA(Sec) with serine, to form the misacylated tRNA L-seryl-tRNA(Sec), which will be further converted into selenocysteinyl-tRNA(Sec). In Methanothermobacter thermautotrophicus (strain ATCC 29096 / DSM 1053 / JCM 10044 / NBRC 100330 / Delta H) (Methanobacterium thermoautotrophicum), this protein is Type-2 serine--tRNA ligase (serS).